Here is a 112-residue protein sequence, read N- to C-terminus: Protein FAM32A (112 aa).

Residues 23–56 (TKRKKKKKDKDKAKMLEAMGTSKKNEEEKRRCLD) form a disordered region. The segment covering 45–56 (KKNEEEKRRCLD) has biased composition (basic and acidic residues).

Belongs to the FAM32 family.

The protein localises to the nucleus. Its function is as follows. May induce G2 arrest and apoptosis. May also increase cell sensitivity to apoptotic stimuli. In Rattus norvegicus (Rat), this protein is Protein FAM32A (Fam32a).